The primary structure comprises 448 residues: 4-hydroxybenzoate transporter PcaK (448 aa).

The Cytoplasmic portion of the chain corresponds to 1–30 (MNSPSLPAVERLDVQAFINAQPLSPYQWRI). Residues 31–51 (VLLCFLIVFLDGLDTAAMGFI) traverse the membrane as a helical segment. The Periplasmic segment spans residues 52–67 (APALTQDWGIDRASLG). Residues 68–88 (PVMSAALIGMVFGALGSGPLA) traverse the membrane as a helical segment. Residues 89–94 (DRYGRK) lie on the Cytoplasmic side of the membrane. Residues 95 to 115 (LVLVAAVFLFGLFSLASAYST) traverse the membrane as a helical segment. At 116–119 (NVEQ) the chain is on the periplasmic side. A helical transmembrane segment spans residues 120–140 (LLALRFLTGLGLGAAMPNATT). Over 141 to 152 (LLSEYTPERLKS) the chain is Cytoplasmic. Residues 153–173 (LLVTSMFCGFNLGMACGGFVS) traverse the membrane as a helical segment. At 174–184 (AKLIPLFGWHS) the chain is on the periplasmic side. Residues 185-205 (LLLLGGLLPLVLAVVLLFRLP) form a helical membrane-spanning segment. Topologically, residues 206–261 (ESARYLVVRNRGSERVRQVLAPIAPAQVALARSFHVPEQQTVQARNVFAVIFSGTY) are cytoplasmic. The chain crosses the membrane as a helical span at residues 262 to 282 (SAGTLLLWLTYFMGLVIVYLL). Topologically, residues 283-301 (TSWLPTLMRDSGASLEQAA) are periplasmic. Residues 302–322 (FIGALFQFGGVLSAVAVGWAM) form a helical membrane-spanning segment. Residues 323 to 329 (DRFNPHK) lie on the Cytoplasmic side of the membrane. Residues 330–350 (VIGLFYLLAGVFAWCVGQSLG) traverse the membrane as a helical segment. Residue Gln-351 is a topological domain, periplasmic. The chain crosses the membrane as a helical span at residues 352 to 372 (VTLLATLVLLAGMCINGAQSA). Residues 373–398 (MPSLAARFYPTQGRATGVSWMLGIGR) are Cytoplasmic-facing. The helical transmembrane segment at 399–419 (FGAILGAWIGATLLGLGWNFE) threads the bilayer. The Periplasmic segment spans residues 420-421 (QV). A helical membrane pass occupies residues 422-442 (LTALVLPAALATAAVLLKGLV). Residues 443–448 (SHADAG) lie on the Cytoplasmic side of the membrane.

It belongs to the major facilitator superfamily. Aromatic acid:H(+) symporter (AAHS) (TC 2.A.1.15) family.

It is found in the cell inner membrane. Its function is as follows. Transports 4-hydroxybenzoate (4-HBA) and protocatechuate across the membrane. Driven by the proton motive force. Also functions as a chemoreceptor, which is required for chemotaxis to aromatic acids. The chain is 4-hydroxybenzoate transporter PcaK (pcaK) from Pseudomonas aeruginosa (strain ATCC 15692 / DSM 22644 / CIP 104116 / JCM 14847 / LMG 12228 / 1C / PRS 101 / PAO1).